Consider the following 507-residue polypeptide: Beta-glucosidase 12 (507 aa).

The N-terminal stretch at M1–A22 is a signal peptide. Q50 is an a beta-D-glucoside binding site. N81 is a glycosylation site (N-linked (GlcNAc...) asparagine). A beta-D-glucoside-binding positions include H154 and N199–E200. Catalysis depends on E200, which acts as the Proton donor. Cysteines 219 and 227 form a disulfide. Residue N226 is glycosylated (N-linked (GlcNAc...) asparagine). Residue Y344 participates in a beta-D-glucoside binding. N358 is a glycosylation site (N-linked (GlcNAc...) asparagine). Residues E414, W459, E466–W467, and F475 contribute to the a beta-D-glucoside site. Catalysis depends on E414, which acts as the Nucleophile.

The protein belongs to the glycosyl hydrolase 1 family.

The enzyme catalyses Hydrolysis of terminal, non-reducing beta-D-glucosyl residues with release of beta-D-glucose.. The sequence is that of Beta-glucosidase 12 from Arabidopsis thaliana (Mouse-ear cress).